The chain runs to 143 residues: Transcriptional regulator MraZ (143 aa).

SpoVT-AbrB domains follow at residues 5–47 and 76–119; these read EYRH…PQSE and ASEC…SKTL.

It belongs to the MraZ family. As to quaternary structure, forms oligomers.

Its subcellular location is the cytoplasm. The protein localises to the nucleoid. This Shouchella clausii (strain KSM-K16) (Alkalihalobacillus clausii) protein is Transcriptional regulator MraZ.